The sequence spans 265 residues: Putative hydro-lyase Teth514_1597 (265 aa).

It belongs to the D-glutamate cyclase family.

In Thermoanaerobacter sp. (strain X514), this protein is Putative hydro-lyase Teth514_1597.